Reading from the N-terminus, the 459-residue chain is Glutamate--tRNA ligase 2 (459 aa).

A 'HIGH' region motif is present at residues 8–18 (PSPTGYLHIGG). The short motif at 237–241 (KLSKR) is the 'KMSKS' region element. Lys240 provides a ligand contact to ATP.

This sequence belongs to the class-I aminoacyl-tRNA synthetase family. Glutamate--tRNA ligase type 1 subfamily. In terms of assembly, monomer.

Its subcellular location is the cytoplasm. It catalyses the reaction tRNA(Glu) + L-glutamate + ATP = L-glutamyl-tRNA(Glu) + AMP + diphosphate. Functionally, catalyzes the attachment of glutamate to tRNA(Glu) in a two-step reaction: glutamate is first activated by ATP to form Glu-AMP and then transferred to the acceptor end of tRNA(Glu). This Campylobacter concisus (strain 13826) protein is Glutamate--tRNA ligase 2.